Consider the following 329-residue polypeptide: Isopentenyl-diphosphate delta-isomerase (329 aa).

4 to 5 (RK) is a binding site for substrate. FMN contacts are provided by residues 59–61 (AMT), Ser-89, and Asn-116. Gln-146 provides a ligand contact to substrate. A Mg(2+)-binding site is contributed by Glu-147. FMN contacts are provided by residues Lys-178, Ser-203, Thr-208, 252–254 (GVR), and 273–274 (SR).

It belongs to the IPP isomerase type 2 family. In terms of assembly, homooctamer. Dimer of tetramers. It depends on FMN as a cofactor. The cofactor is NADPH. Mg(2+) is required as a cofactor.

The protein localises to the cytoplasm. The catalysed reaction is isopentenyl diphosphate = dimethylallyl diphosphate. In terms of biological role, involved in the biosynthesis of isoprenoids. Catalyzes the 1,3-allylic rearrangement of the homoallylic substrate isopentenyl (IPP) to its allylic isomer, dimethylallyl diphosphate (DMAPP). The polypeptide is Isopentenyl-diphosphate delta-isomerase (Streptococcus pyogenes serotype M28 (strain MGAS6180)).